The following is a 57-amino-acid chain: Small ribosomal subunit protein bS21 (57 aa).

The protein belongs to the bacterial ribosomal protein bS21 family.

The protein is Small ribosomal subunit protein bS21 of Phytoplasma australiense.